The chain runs to 90 residues: Elongation factor 1-beta (90 aa).

Belongs to the EF-1-beta/EF-1-delta family.

In terms of biological role, promotes the exchange of GDP for GTP in EF-1-alpha/GDP, thus allowing the regeneration of EF-1-alpha/GTP that could then be used to form the ternary complex EF-1-alpha/GTP/AAtRNA. The protein is Elongation factor 1-beta of Desulfurococcus amylolyticus (strain DSM 18924 / JCM 16383 / VKM B-2413 / 1221n) (Desulfurococcus kamchatkensis).